A 248-amino-acid chain; its full sequence is UPF0651 protein YPL107W, mitochondrial (248 aa).

A mitochondrion-targeting transit peptide spans 1–26 (MIRNQGWSLLYRIYPVRRFTRYSRVD). An Oxidoreductase-like domain is found at 69-116 (KKIAGVQVPAKPQEPDNCCMSGCVNCVWEIYSEDLRDWKHRRKEAAEK).

It belongs to the UPF0651 family.

It is found in the mitochondrion. The polypeptide is UPF0651 protein YPL107W, mitochondrial (Saccharomyces cerevisiae (strain ATCC 204508 / S288c) (Baker's yeast)).